A 313-amino-acid chain; its full sequence is Heterogeneous nuclear ribonucleoproteins C1/C2 (313 aa).

Alanine 2 carries the post-translational modification N-acetylalanine. Glycyl lysine isopeptide (Lys-Gly) (interchain with G-Cter in SUMO2) cross-links involve residues lysine 8, lysine 50, lysine 89, and lysine 94. In terms of domain architecture, RRM spans 16–87 (SRVFIGNLNT…QVLDINLAAE (72 aa)). 3 positions are modified to phosphoserine: serine 113, serine 115, and serine 121. Disordered stretches follow at residues 139–191 (YPAR…KLKG) and 219–313 (EKEQ…EDDS). Residues 155-161 (PSKRQRV) carry the Nuclear localization signal motif. Phosphoserine is present on residues serine 162 and serine 166. Over residues 175-186 (SKSGQRGSSSKS) the composition is skewed to low complexity. Lysine 176 is modified (N6-acetyllysine; alternate). Lysine 176 is covalently cross-linked (Glycyl lysine isopeptide (Lys-Gly) (interchain with G-Cter in SUMO2); alternate). Residues 191 to 226 (GDDLQAIKKELTQIKQKVDSLLESLEKIEKEQSKQA) adopt a coiled-coil conformation. Lysine 224 participates in a covalent cross-link: Glycyl lysine isopeptide (Lys-Gly) (interchain with G-Cter in SUMO2). Residues serine 229, serine 231, and serine 232 each carry the phosphoserine modification. Lysine 237 participates in a covalent cross-link: Glycyl lysine isopeptide (Lys-Gly) (interchain with G-Cter in SUMO2). A Glycyl lysine isopeptide (Lys-Gly) (interchain with G-Cter in SUMO2); alternate cross-link involves residue lysine 240. Lysine 240 is covalently cross-linked (Glycyl lysine isopeptide (Lys-Gly) (interchain with G-Cter in SUMO1); alternate). Phosphoserine is present on residues serine 241, serine 246, serine 247, and serine 249. A compositionally biased stretch (basic and acidic residues) spans 250–261 (VKKDETNVKMES). Residues lysine 251 and lysine 252 each participate in a glycyl lysine isopeptide (Lys-Gly) (interchain with G-Cter in SUMO2) cross-link. Lysine 258 is covalently cross-linked (Glycyl lysine isopeptide (Lys-Gly) (interchain with G-Cter in SUMO2); alternate). Residue lysine 258 forms a Glycyl lysine isopeptide (Lys-Gly) (interchain with G-Cter in SUMO); alternate linkage. Phosphoserine is present on residues serine 261 and serine 268. Residues 263-284 (AGADDSAEEGDLLDDDDNEDRG) show a composition bias toward acidic residues. Basic and acidic residues predominate over residues 285–294 (DDQLELKDDE). A compositionally biased stretch (acidic residues) spans 295-313 (KEPEEGEDDRDSANGEDDS). Serine 306 and serine 313 each carry phosphoserine.

It belongs to the RRM HNRPC family. RALY subfamily. As to quaternary structure, tetramer composed of 3 copies of isoform C1 and 1 copy of isoform C2. Assembly of 3 tetramers with bound pre-mRNA gives rise to a 19S complex that interacts with HNRNPA2B1 tetramers. Component of the 40S hnRNP particle. Identified in the spliceosome C complex. Interacts with IGF2BP1. Interacts with DHX9; this interaction is direct, enhanced probably by their concomitant binding to RNA and mediates the attachment to actin filaments. Interacts with PPIA/CYPA. In terms of processing, phosphorylated on Ser-268 and Ser-306 in resting cells. Sumoylated. Sumoylation reduces affinity for mRNA. Post-translationally, ubiquitinated and degraded after nucleo-cytoplasmic transport by YWHAE.

The protein localises to the nucleus. Its function is as follows. Binds pre-mRNA and nucleates the assembly of 40S hnRNP particles. Interacts with poly-U tracts in the 3'-UTR or 5'-UTR of mRNA and modulates the stability and the level of translation of bound mRNA molecules. Single HNRNPC tetramers bind 230-240 nucleotides. Trimers of HNRNPC tetramers bind 700 nucleotides. May play a role in the early steps of spliceosome assembly and pre-mRNA splicing. N6-methyladenosine (m6A) has been shown to alter the local structure in mRNAs and long non-coding RNAs (lncRNAs) via a mechanism named 'm(6)A-switch', facilitating binding of HNRNPC, leading to regulation of mRNA splicing. The protein is Heterogeneous nuclear ribonucleoproteins C1/C2 (Hnrnpc) of Mus musculus (Mouse).